The sequence spans 535 residues: Succinate-semialdehyde dehydrogenase, mitochondrial (535 aa).

The transit peptide at M1–Y47 directs the protein to the mitochondrion. K126 carries the N6-acetyllysine; alternate modification. K126 carries the post-translational modification N6-succinyllysine; alternate. N6-succinyllysine is present on residues K135 and K184. Residues R213 and K228 to E231 each bind NAD(+). R213 serves as a coordination point for substrate. An N6-acetyllysine; alternate modification is found at K265. Position 265 is an N6-succinyllysine; alternate (K265). G284–G289 is a binding site for NAD(+). The Proton acceptor role is filled by E306. Residue R334 coordinates substrate. The active-site Nucleophile is the C340. The cysteines at positions 340 and 342 are disulfide-linked. N6-acetyllysine is present on K365. An N6-succinyllysine modification is found at K402. K411 is modified (N6-acetyllysine). Position 498 (S498) interacts with substrate. S499 carries the post-translational modification Phosphoserine.

Belongs to the aldehyde dehydrogenase family. In terms of assembly, homotetramer.

It is found in the mitochondrion. It catalyses the reaction succinate semialdehyde + NAD(+) + H2O = succinate + NADH + 2 H(+). The protein operates within amino-acid degradation; 4-aminobutanoate degradation. Redox-regulated. Inhibited under oxydizing conditions. Functionally, catalyzes one step in the degradation of the inhibitory neurotransmitter gamma-aminobutyric acid (GABA). This chain is Succinate-semialdehyde dehydrogenase, mitochondrial (ALDH5A1), found in Hylobates lar (Lar gibbon).